The chain runs to 140 residues: Large ribosomal subunit protein uL13 (140 aa).

Part of the 50S ribosomal subunit.

In terms of biological role, this protein is one of the early assembly proteins of the 50S ribosomal subunit, although it is not seen to bind rRNA by itself. It is important during the early stages of 50S assembly. The polypeptide is Large ribosomal subunit protein uL13 (Thermus thermophilus (strain ATCC 27634 / DSM 579 / HB8)).